Reading from the N-terminus, the 289-residue chain is Lipoyl synthase 1 (289 aa).

Cys-33, Cys-38, Cys-44, Cys-59, Cys-63, Cys-66, and Ser-274 together coordinate [4Fe-4S] cluster. The Radical SAM core domain occupies Phe-45 to Leu-263.

This sequence belongs to the radical SAM superfamily. Lipoyl synthase family. [4Fe-4S] cluster is required as a cofactor.

Its subcellular location is the cytoplasm. It catalyses the reaction [[Fe-S] cluster scaffold protein carrying a second [4Fe-4S](2+) cluster] + N(6)-octanoyl-L-lysyl-[protein] + 2 oxidized [2Fe-2S]-[ferredoxin] + 2 S-adenosyl-L-methionine + 4 H(+) = [[Fe-S] cluster scaffold protein] + N(6)-[(R)-dihydrolipoyl]-L-lysyl-[protein] + 4 Fe(3+) + 2 hydrogen sulfide + 2 5'-deoxyadenosine + 2 L-methionine + 2 reduced [2Fe-2S]-[ferredoxin]. The protein operates within protein modification; protein lipoylation via endogenous pathway; protein N(6)-(lipoyl)lysine from octanoyl-[acyl-carrier-protein]: step 2/2. Catalyzes the radical-mediated insertion of two sulfur atoms into the C-6 and C-8 positions of the octanoyl moiety bound to the lipoyl domains of lipoate-dependent enzymes, thereby converting the octanoylated domains into lipoylated derivatives. This is Lipoyl synthase 1 from Parasynechococcus marenigrum (strain WH8102).